Consider the following 222-residue polypeptide: Prolactin-2C5 (222 aa).

The signal sequence occupies residues 1-29; it reads MLPSLIQPCSWILLLLLVNSSLLWKNVAS. The cysteines at positions 33 and 40 are disulfide-linked. The N-linked (GlcNAc...) asparagine glycan is linked to asparagine 57. 2 disulfide bridges follow: cysteine 87/cysteine 197 and cysteine 214/cysteine 222.

The protein belongs to the somatotropin/prolactin family. In terms of processing, N-glycosylated and sialylated. In terms of tissue distribution, expressed in placenta (at protein level). Expressed in the tail hair follicle, with highest expression detected in the keratinocytes of the outer root sheath. Expressed in ear skin with lesser amounts in small intestine. Not detected in brain at 18 dpc, postnatal day 25 or postnatal day 55.

Its subcellular location is the secreted. In Mus musculus (Mouse), this protein is Prolactin-2C5.